The following is a 529-amino-acid chain: MANQDFLNEINKRRTFAIISHPDAGKTTITEKVLLFGQAIQRAGTVKGRGSNQHAKSDWMEMEKQRGISITTSVMQFPYADCLVNLLDTPGHEDFSEDTYRTLTAVDCCLMVIDSSKGVEDRTRKLMEVTRLRDTPILTFMNKLDRDIRDPMELMDEVETELKIACSPVTWPIGCGKLFKGVYHILRDETYLYQTGQGHTIQNSRVIKGLDNPELDEAIGDDLAVQLRDELELVLGASHEFDHEAFLAGELTPVFFGTALGNFGVNHMLDGLVKWAPAPMPRQTDMREVTAAEETFTGFVFKIQANMDPKHRDRVAFLRVVSGMYDKGMKLHQVRTKKDVVISDALTFMAGDRSHVEHAYPGDIIGLHNHGTIQIGDTFTQGEMLKFTGIPNFAPELFRRIRLRDPLKQKQLLKGLVQLSEEGAVQVFRPLANNDLIVGAVGVLQFDVVVARLKGEYNVEAIYESVNVSTARWVECSNEKKLEEFKRKNEQHLALDGGDNLTYIAPTMVNLNLTRERYPDIEFHQTREH.

The region spanning 11 to 280 (NKRRTFAIIS…GLVKWAPAPM (270 aa)) is the tr-type G domain. GTP contacts are provided by residues 20 to 27 (SHPDAGKT), 88 to 92 (DTPGH), and 142 to 145 (NKLD).

Belongs to the TRAFAC class translation factor GTPase superfamily. Classic translation factor GTPase family. PrfC subfamily.

The protein localises to the cytoplasm. Increases the formation of ribosomal termination complexes and stimulates activities of RF-1 and RF-2. It binds guanine nucleotides and has strong preference for UGA stop codons. It may interact directly with the ribosome. The stimulation of RF-1 and RF-2 is significantly reduced by GTP and GDP, but not by GMP. In Proteus mirabilis (strain HI4320), this protein is Peptide chain release factor 3.